The sequence spans 380 residues: Queuine tRNA-ribosyltransferase (380 aa).

The active-site Proton acceptor is the D96. Residues 96–100 (DSGGF), D150, Q193, and G220 each bind substrate. Residues 251-257 (GVGAPDS) are RNA binding. The active-site Nucleophile is the D270. Positions 275-279 (TRIAR) are RNA binding; important for wobble base 34 recognition. Zn(2+) is bound by residues C308, C310, C313, and H339.

The protein belongs to the queuine tRNA-ribosyltransferase family. Homodimer. Within each dimer, one monomer is responsible for RNA recognition and catalysis, while the other monomer binds to the replacement base PreQ1. Zn(2+) is required as a cofactor.

It carries out the reaction 7-aminomethyl-7-carbaguanine + guanosine(34) in tRNA = 7-aminomethyl-7-carbaguanosine(34) in tRNA + guanine. Its pathway is tRNA modification; tRNA-queuosine biosynthesis. In terms of biological role, catalyzes the base-exchange of a guanine (G) residue with the queuine precursor 7-aminomethyl-7-deazaguanine (PreQ1) at position 34 (anticodon wobble position) in tRNAs with GU(N) anticodons (tRNA-Asp, -Asn, -His and -Tyr). Catalysis occurs through a double-displacement mechanism. The nucleophile active site attacks the C1' of nucleotide 34 to detach the guanine base from the RNA, forming a covalent enzyme-RNA intermediate. The proton acceptor active site deprotonates the incoming PreQ1, allowing a nucleophilic attack on the C1' of the ribose to form the product. After dissociation, two additional enzymatic reactions on the tRNA convert PreQ1 to queuine (Q), resulting in the hypermodified nucleoside queuosine (7-(((4,5-cis-dihydroxy-2-cyclopenten-1-yl)amino)methyl)-7-deazaguanosine). The protein is Queuine tRNA-ribosyltransferase of Streptococcus sanguinis (strain SK36).